The primary structure comprises 262 residues: Nodulation protein J (262 aa).

Residues 33–259 (ASILGNLAEP…FLSVGLLQRR (227 aa)) form the ABC transmembrane type-2 domain. 6 consecutive transmembrane segments (helical) span residues 35–55 (ILGNLAEPVTSLFGLGFGLGA), 62–82 (GIPYVAFLAAGMVATSAMISA), 125–145 (ALLAGTAMMLVAATMGFASWP), 147–167 (VLFALPVIALTGFAFASLAMI), 177–197 (YFIFYQTLFLTPMLFLSGAVF), and 236–256 (LHISALCIFAVMPFFLSVGLL).

This sequence belongs to the ABC-2 integral membrane protein family. Lipooligosaccharide exporter (TC 3.A.1.102) subfamily. The complex is composed of two ATP-binding proteins (NodI) and two transmembrane proteins (NodJ).

Its subcellular location is the cell inner membrane. Its function is as follows. Part of the ABC transporter complex NodIJ involved in the export of the nodulation factors (Nod factors), the bacterial signal molecules that induce symbiosis and subsequent nodulation induction. Nod factors are LCO (lipo-chitin oligosaccharide), a modified beta-1,4-linked N-acetylglucosamine oligosaccharide. This subunit encodes the transporter. This chain is Nodulation protein J (nodJ), found in Sinorhizobium fredii (strain NBRC 101917 / NGR234).